Reading from the N-terminus, the 158-residue chain is NAD(P)H-quinone oxidoreductase subunit J, chloroplastic (158 aa).

This sequence belongs to the complex I 30 kDa subunit family. NDH is composed of at least 16 different subunits, 5 of which are encoded in the nucleus.

It is found in the plastid. It localises to the chloroplast thylakoid membrane. It carries out the reaction a plastoquinone + NADH + (n+1) H(+)(in) = a plastoquinol + NAD(+) + n H(+)(out). It catalyses the reaction a plastoquinone + NADPH + (n+1) H(+)(in) = a plastoquinol + NADP(+) + n H(+)(out). NDH shuttles electrons from NAD(P)H:plastoquinone, via FMN and iron-sulfur (Fe-S) centers, to quinones in the photosynthetic chain and possibly in a chloroplast respiratory chain. The immediate electron acceptor for the enzyme in this species is believed to be plastoquinone. Couples the redox reaction to proton translocation, and thus conserves the redox energy in a proton gradient. This is NAD(P)H-quinone oxidoreductase subunit J, chloroplastic from Illicium oligandrum (Star anise).